The sequence spans 209 residues: MNQATEIAKLLLNIKAVTLNLHEPYRYTSGILSPIYCDNRLIISYPEKRKMIIEAFLQLIEKNHLSFDIVAGTATAGIPHAAWIADRLDLPMIYVRAKAKTHGKQNQIEGRIRKGQRALIVEDLISTGKSALAAGLALREKGVTVTDCIAIFSYQLPQAQQNFSDANINCHALSHFDTLIEMAVDEGYIDEIEKQKALAWNKDPEHWQP.

Residues arginine 96, lysine 100, histidine 102, and 122-130 (EDLISTGKS) contribute to the 5-phospho-alpha-D-ribose 1-diphosphate site. Serine 126 serves as a coordination point for orotate.

It belongs to the purine/pyrimidine phosphoribosyltransferase family. PyrE subfamily. Homodimer. It depends on Mg(2+) as a cofactor.

It carries out the reaction orotidine 5'-phosphate + diphosphate = orotate + 5-phospho-alpha-D-ribose 1-diphosphate. It functions in the pathway pyrimidine metabolism; UMP biosynthesis via de novo pathway; UMP from orotate: step 1/2. Functionally, catalyzes the transfer of a ribosyl phosphate group from 5-phosphoribose 1-diphosphate to orotate, leading to the formation of orotidine monophosphate (OMP). The polypeptide is Orotate phosphoribosyltransferase (Coxiella burnetii (strain RSA 493 / Nine Mile phase I)).